The chain runs to 688 residues: DNA-directed RNA polymerase subunit beta' (688 aa).

Zn(2+)-binding residues include C69, C71, C87, and C90. Residues D493, D495, and D497 each coordinate Mg(2+).

It belongs to the RNA polymerase beta' chain family. RpoC1 subfamily. In plastids the minimal PEP RNA polymerase catalytic core is composed of four subunits: alpha, beta, beta', and beta''. When a (nuclear-encoded) sigma factor is associated with the core the holoenzyme is formed, which can initiate transcription. It depends on Mg(2+) as a cofactor. Requires Zn(2+) as cofactor.

It is found in the plastid. The protein localises to the chloroplast. It catalyses the reaction RNA(n) + a ribonucleoside 5'-triphosphate = RNA(n+1) + diphosphate. DNA-dependent RNA polymerase catalyzes the transcription of DNA into RNA using the four ribonucleoside triphosphates as substrates. The chain is DNA-directed RNA polymerase subunit beta' from Chloranthus spicatus (Chulantree).